The following is a 569-amino-acid chain: Beta-lactamase-like protein 4 (569 aa).

The N-terminal stretch at M1–S19 is a signal peptide. N87, N172, N239, N240, N250, N299, N343, N412, N419, N436, N468, N509, and N535 each carry an N-linked (GlcNAc...) asparagine glycan.

Belongs to the beta-lactamase family.

It localises to the secreted. The sequence is that of Beta-lactamase-like protein 4 from Dictyostelium discoideum (Social amoeba).